The primary structure comprises 225 residues: U2 small nuclear ribonucleoprotein B'' (225 aa).

The RRM 1 domain maps to 7–86 (HTIYINNMND…KPMRIQYAKT (80 aa)). A disordered region spans residues 100 to 144 (DKEKKKEKKKAKTMEQAAAAANKKPGQGTPNAANTQGTAAPNPQV). Residue lysine 111 is modified to N6-acetyllysine; alternate. Lysine 111 participates in a covalent cross-link: Glycyl lysine isopeptide (Lys-Gly) (interchain with G-Cter in SUMO2); alternate. Positions 113–123 (MEQAAAAANKK) are enriched in low complexity. Residues 127-140 (GTPNAANTQGTAAP) show a composition bias toward polar residues. Tyrosine 151 is subject to Phosphotyrosine. Residues 151-225 (YILFLNNLPE…HAMKITYAKK (75 aa)) form the RRM 2 domain.

It belongs to the RRM U1 A/B'' family. Identified in the spliceosome B complex. Identified in the spliceosome C complex. Present in a spliceosome complex assembled in vitro, and composed of SNRPB2, HPRP8BP and CRNKL1. Contributes to the binding of stem loop IV of U2 snRNA with SNRPP1.

It is found in the nucleus. In terms of biological role, involved in pre-mRNA splicing as component of the spliceosome. Associated with sn-RNP U2, where it contributes to the binding of stem loop IV of U2 snRNA. The protein is U2 small nuclear ribonucleoprotein B'' (Snrpb2) of Mus musculus (Mouse).